The primary structure comprises 149 residues: Arginine repressor (149 aa).

The protein belongs to the ArgR family. As to quaternary structure, homohexamer.

It is found in the cytoplasm. Its pathway is amino-acid biosynthesis; L-arginine biosynthesis [regulation]. Regulates arginine biosynthesis genes. The sequence is that of Arginine repressor (argR) from Geobacillus stearothermophilus (Bacillus stearothermophilus).